A 306-amino-acid chain; its full sequence is MTNKPAKRPVNGVLLLDKPEGLSSNTALQKTRHLFRAEKAGHTGVLDPLATGLLPVCFGEATKFAQYLINADKAYTATLKLGEASSTGDAEGEIVATARADISLAEFQTACQALTGNIRQVPPMFSALKHEGKPLYEYARKGIVIERKARDITVYAIDIAEFDAPKAVIDVRCSKGTYIRTLSEDIAKHIGTFAHLTALRRTETAGFTIAQSHTLEALANLDETERDSLLLPCDVLVAHFPQTVLNDYAVHMLRCGQRPRFEEDLPSDTPVRVYTENGRFVGLAEYQKEICRLKALRLMNTAASAA.

Asp-47 serves as the catalytic Nucleophile.

This sequence belongs to the pseudouridine synthase TruB family. Type 1 subfamily.

It carries out the reaction uridine(55) in tRNA = pseudouridine(55) in tRNA. In terms of biological role, responsible for synthesis of pseudouridine from uracil-55 in the psi GC loop of transfer RNAs. The sequence is that of tRNA pseudouridine synthase B from Neisseria meningitidis serogroup A / serotype 4A (strain DSM 15465 / Z2491).